A 307-amino-acid polypeptide reads, in one-letter code: Ribosomal RNA small subunit methyltransferase H (307 aa).

S-adenosyl-L-methionine is bound by residues 32 to 34, D52, F78, D99, and Q106; that span reads GGH.

Belongs to the methyltransferase superfamily. RsmH family.

It localises to the cytoplasm. The enzyme catalyses cytidine(1402) in 16S rRNA + S-adenosyl-L-methionine = N(4)-methylcytidine(1402) in 16S rRNA + S-adenosyl-L-homocysteine + H(+). Its function is as follows. Specifically methylates the N4 position of cytidine in position 1402 (C1402) of 16S rRNA. The sequence is that of Ribosomal RNA small subunit methyltransferase H from Caldicellulosiruptor saccharolyticus (strain ATCC 43494 / DSM 8903 / Tp8T 6331).